A 487-amino-acid polypeptide reads, in one-letter code: CUGBP Elav-like family member 1 (487 aa).

Met-1 bears the N-acetylmethionine mark. At Thr-4 the chain carries Phosphothreonine. 2 RRM domains span residues 16 to 99 (IKMF…PADS) and 108 to 188 (RKLF…FADT). A Glycyl lysine isopeptide (Lys-Gly) (interchain with G-Cter in SUMO2) cross-link involves residue Lys-109. 2 positions are modified to phosphoserine: Ser-179 and Ser-303. Positions 277–310 (TPSGTNALTTSSSPLSVLTSSAGSSPSSSSSNSV) are disordered. Residues 283–310 (ALTTSSSPLSVLTSSAGSSPSSSSSNSV) show a composition bias toward low complexity. Residues 402–480 (ANLFIYHLPQ…KRLKVQLKRS (79 aa)) form the RRM 3 domain.

The protein belongs to the CELF/BRUNOL family. Interacts with HNRNPH1; the interaction in RNA-dependent. Interacts with PARN. Component of an EIF2 complex at least composed of CELF1/CUGBP1, CALR, CALR3, EIF2S1, EIF2S2, HSP90B1 and HSPA5. Associates with polysomes.

It localises to the nucleus. It is found in the cytoplasm. Its function is as follows. RNA-binding protein implicated in the regulation of several post-transcriptional events. Involved in pre-mRNA alternative splicing, mRNA translation and stability. Mediates exon inclusion and/or exclusion in pre-mRNA that are subject to tissue-specific and developmentally regulated alternative splicing. Specifically activates exon 5 inclusion of cardiac isoforms of TNNT2 during heart remodeling at the juvenile to adult transition. Acts both as an activator and as a repressor of a pair of coregulated exons: promotes inclusion of the smooth muscle (SM) exon but exclusion of the non-muscle (NM) exon in actinin pre-mRNAs. Activates SM exon 5 inclusion by antagonizing the repressive effect of PTB. Promotes exclusion of exon 11 of the INSR pre-mRNA. Inhibits, together with HNRNPH1, insulin receptor (IR) pre-mRNA exon 11 inclusion in myoblast. Increases translation and controls the choice of translation initiation codon of CEBPB mRNA. Increases mRNA translation of CEBPB in aging liver. Increases translation of CDKN1A mRNA by antagonizing the repressive effect of CALR3. Mediates rapid cytoplasmic mRNA deadenylation. Recruits the deadenylase PARN to the poly(A) tail of EDEN-containing mRNAs to promote their deadenylation. Required for completion of spermatogenesis. Binds to (CUG)n triplet repeats in the 3'-UTR of transcripts such as DMPK and to Bruno response elements (BREs). Binds to muscle-specific splicing enhancer (MSE) intronic sites flanking the alternative exon 5 of TNNT2 pre-mRNA. Binds to AU-rich sequences (AREs or EDEN-like) localized in the 3'-UTR of JUN and FOS mRNAs. Binds to the IR RNA. Binds to the 5'-region of CDKN1A and CEBPB mRNAs. Binds with the 5'-region of CEBPB mRNA in aging liver. May be a specific regulator of miRNA biogenesis. Binds to primary microRNA pri-MIR140 and, with CELF2, negatively regulates the processing to mature miRNA. The protein is CUGBP Elav-like family member 1 (Celf1) of Rattus norvegicus (Rat).